We begin with the raw amino-acid sequence, 299 residues long: NAD kinase (299 aa).

Asp-78 (proton acceptor) is an active-site residue. Residues Asp-78–Gly-79, Asn-151–Asp-152, Lys-162, Arg-179, Asp-181, Thr-192–Ser-197, and Gln-252 contribute to the NAD(+) site.

This sequence belongs to the NAD kinase family. It depends on a divalent metal cation as a cofactor.

It is found in the cytoplasm. It catalyses the reaction NAD(+) + ATP = ADP + NADP(+) + H(+). Functionally, involved in the regulation of the intracellular balance of NAD and NADP, and is a key enzyme in the biosynthesis of NADP. Catalyzes specifically the phosphorylation on 2'-hydroxyl of the adenosine moiety of NAD to yield NADP. The chain is NAD kinase from Coxiella burnetii (strain CbuG_Q212) (Coxiella burnetii (strain Q212)).